A 197-amino-acid polypeptide reads, in one-letter code: Protein RESISTANCE TO PHYTOPHTHORA 1, chloroplastic (197 aa).

The transit peptide at 1-52 (MSWSLCSTHGVSSSIALTYGFRHRRRSTFRIFATSDGLEPKDDPPESPLPSS) directs the protein to the chloroplast. The disordered stretch occupies residues 35 to 56 (SDGLEPKDDPPESPLPSSSSAL). 4 helical membrane passes run 93–113 (FEVQGYASMFLGGVLSFNLLF), 120–140 (LWRLMGMWSIWMFTIPSLRAR), 150–170 (LNYLFLIVPLLNVAIPFFWKS), and 173–193 (LVWSADTVAFFAMYAWKLGWL).

The protein localises to the plastid. It localises to the chloroplast. The protein resides in the membrane. Plays a positive role in the immune response to the oomycetes P.brassicae, including induced oxidative burst (e.g. H(2)O(2)) and enhanced expression of defense-related genes. This Arabidopsis thaliana (Mouse-ear cress) protein is Protein RESISTANCE TO PHYTOPHTHORA 1, chloroplastic.